Consider the following 75-residue polypeptide: Mating pheromone Er-1/Er-3 (75 aa).

Residues 1–19 form the signal peptide; that stretch reads MNKLAILAIIAMVLFSANA. Positions 20–35 are excised as a propeptide; it reads FRFQSRLRSNVEAKTG. Disulfide bonds link cysteine 38–cysteine 54, cysteine 45–cysteine 71, and cysteine 50–cysteine 63.

As to quaternary structure, homodimer.

The protein resides in the secreted. It localises to the cell membrane. Its function is as follows. Mating ciliate pheromones (or gamones) are diffusible extracellular communication signals that distinguish different intraspecific classes of cells commonly referred to as 'mating types'. They prepare the latter for conjugation by changing their cell surface properties. The membrane-bound form promotes inter-cellular communication and adhesion for mating pair formation and may act as binding site for the secreted form. This Euplotes raikovi protein is Mating pheromone Er-1/Er-3 (MAT1).